Reading from the N-terminus, the 137-residue chain is Chaperone protein YscB (137 aa).

In terms of assembly, interacts with SycN to form a complex which specifically binds to YopN.

It localises to the cytoplasm. The protein localises to the cell inner membrane. In terms of biological role, functions as a specific chaperone for YopN. It could facilitate the secretion and the subsequent translocation of YopN. The sequence is that of Chaperone protein YscB (yscB) from Yersinia pestis.